The chain runs to 224 residues: Golgi to ER traffic protein 1 (224 aa).

At 1 to 33 (MDEAIIVDAEFVAPVGTTAGEFVPIDRAPAAGL) the chain is on the lumenal side. Residues 34 to 53 (LLLVAFVVLYAKVISKLGKP) form a helical membrane-spanning segment. Residues 54–137 (AIQEFLWEII…RFFTIISSAI (84 aa)) lie on the Cytoplasmic side of the membrane. The stretch at 102–124 (AKLDREYGKLKVEIEDINNLLTA) forms a coiled coil. Residues 138–158 (FLSTTGMKMFLRIKHRKAAIF) form a helical membrane-spanning segment. Residues 159–182 (WLPKNAFPYPIEYILSFSSAPLGS) are Lumenal-facing. The helical transmembrane segment at 183-199 (VSVSAWLMICDAAMDLI) threads the bilayer. The Cytoplasmic portion of the chain corresponds to 200 to 224 (VTIFVALVVGVIGMLRSNKVKPKTA).

It belongs to the WRB/GET1 family. In terms of assembly, component of the Golgi to ER traffic (GET) complex, which is composed of GET1, GET2 and GET3. Within the complex, GET1 and GET2 form a heterotetramer which is stabilized by phosphatidylinositol binding and which binds to the GET3 homodimer.

The protein resides in the endoplasmic reticulum membrane. It localises to the golgi apparatus membrane. Its function is as follows. Required for the post-translational delivery of tail-anchored (TA) proteins to the endoplasmic reticulum. Together with GET2, acts as a membrane receptor for soluble GET3, which recognizes and selectively binds the transmembrane domain of TA proteins in the cytosol. The GET complex cooperates with the HDEL receptor ERD2 to mediate the ATP-dependent retrieval of resident ER proteins that contain a C-terminal H-D-E-L retention signal from the Golgi to the ER. The sequence is that of Golgi to ER traffic protein 1 from Yarrowia lipolytica (strain CLIB 122 / E 150) (Yeast).